Reading from the N-terminus, the 649-residue chain is Replication protein E1 (649 aa).

Positions 83-85 match the Nuclear localization signal motif; the sequence is KRK. Residues Ser89, Ser93, and Ser107 each carry the phosphoserine; by host modification. The short motif at 106–115 is the Nuclear export signal element; sequence ISPRLDAIKL. A disordered region spans residues 138-169; the sequence is GYSEVEAGTGTQVEKHGVPENGGDGQEKDTGR. Residues 187–353 form a DNA-binding region region; it reads REHAGTAGIL…QTVIEHGLAD (167 aa). An SF3 helicase domain is found at 452–602; it reads IEFIPFLTKF…FPFDRNGNAV (151 aa). 478–485 contributes to the ATP binding site; that stretch reads GPPDTGKS. Residue Lys559 forms a Glycyl lysine isopeptide (Lys-Gly) (interchain with G-Cter in SUMO) linkage.

It belongs to the papillomaviridae E1 protein family. Can form hexamers. Interacts with E2 protein; this interaction increases E1 DNA binding specificity. Interacts with host DNA polymerase subunit POLA2. Interacts with host single stranded DNA-binding protein RPA1. Interacts with host TOP1; this interaction stimulates the enzymatic activity of TOP1. Post-translationally, phosphorylated. Sumoylated.

It is found in the host nucleus. The catalysed reaction is Couples ATP hydrolysis with the unwinding of duplex DNA by translocating in the 3'-5' direction.. It carries out the reaction ATP + H2O = ADP + phosphate + H(+). In terms of biological role, ATP-dependent DNA 3'-5' helicase required for initiation of viral DNA replication. It forms a complex with the viral E2 protein. The E1-E2 complex binds to the replication origin which contains binding sites for both proteins. During the initial step, a dimer of E1 interacts with a dimer of protein E2 leading to a complex that binds the viral origin of replication with high specificity. Then, a second dimer of E1 displaces the E2 dimer in an ATP-dependent manner to form the E1 tetramer. Following this, two E1 monomers are added to each half of the site, which results in the formation of two E1 trimers on the viral ori. Subsequently, two hexamers will be created. The double hexamer acts as a bi-directional helicase machinery and unwinds the viral DNA and then recruits the host DNA polymerase to start replication. The polypeptide is Replication protein E1 (Homo sapiens (Human)).